A 710-amino-acid polypeptide reads, in one-letter code: Polyribonucleotide nucleotidyltransferase (710 aa).

Mg(2+) is bound by residues Asp489 and Asp495. The KH domain occupies 556–615 (PKIDTIKIDVDKIKVVIGKGGETIDKIIAETGVKIDIDDEGNVSIYSSDQAAINRTKEII). The S1 motif domain occupies 625–693 (GEVYHAKVVR…EKGRVDASMK (69 aa)). The tract at residues 691-710 (SMKALIPRPPKPEKKEEKHD) is disordered. A compositionally biased stretch (basic and acidic residues) spans 700 to 710 (PKPEKKEEKHD).

This sequence belongs to the polyribonucleotide nucleotidyltransferase family. The cofactor is Mg(2+).

The protein localises to the cytoplasm. It carries out the reaction RNA(n+1) + phosphate = RNA(n) + a ribonucleoside 5'-diphosphate. In terms of biological role, involved in mRNA degradation. Catalyzes the phosphorolysis of single-stranded polyribonucleotides processively in the 3'- to 5'-direction. This Streptococcus pyogenes serotype M2 (strain MGAS10270) protein is Polyribonucleotide nucleotidyltransferase.